The following is a 77-amino-acid chain: uncharacterized protein (77 aa).

This is an uncharacterized protein from Bacillus subtilis (strain 168).